We begin with the raw amino-acid sequence, 622 residues long: Membrane protein insertase YidC (622 aa).

Residues 8–28 (LFLALILSMGIWMGVNYFFFP) form a helical membrane-spanning segment. Basic and acidic residues predominate over residues 33 to 61 (KTSETKEVKVDKPSDDKQDQIQKEKKESR). Residues 33-70 (KTSETKEVKVDKPSDDKQDQIQKEKKESRTTIPSKGTK) are disordered. 4 helical membrane-spanning segments follow: residues 413-433 (FTIPNYGWSIIIFAILFKLVF), 484-504 (VGGCLPMVIQIPIFIALYTAF), 532-552 (AIPYFTQTGIGLNLLALLMVG), and 571-591 (MLMYVMPVMMLYIFWNMPSGV).

The protein belongs to the OXA1/ALB3/YidC family. Type 1 subfamily. Interacts with the Sec translocase complex via SecD. Specifically interacts with transmembrane segments of nascent integral membrane proteins during membrane integration.

It is found in the cell inner membrane. In terms of biological role, required for the insertion and/or proper folding and/or complex formation of integral membrane proteins into the membrane. Involved in integration of membrane proteins that insert both dependently and independently of the Sec translocase complex, as well as at least some lipoproteins. Aids folding of multispanning membrane proteins. This chain is Membrane protein insertase YidC, found in Leptospira borgpetersenii serovar Hardjo-bovis (strain JB197).